We begin with the raw amino-acid sequence, 467 residues long: tRNA modification GTPase MnmE (467 aa).

Arg25, Glu87, and Lys130 together coordinate (6S)-5-formyl-5,6,7,8-tetrahydrofolate. Residues 226–389 (GLSVVLAGQP…LRGELLRIAG (164 aa)) form the TrmE-type G domain. Position 236 (Asn236) interacts with K(+). GTP-binding positions include 236-241 (NVGKSS), 255-261 (TPIAGTT), and 280-283 (DTAG). Ser240 is a binding site for Mg(2+). Positions 255, 257, and 260 each coordinate K(+). Thr261 lines the Mg(2+) pocket. Lys467 lines the (6S)-5-formyl-5,6,7,8-tetrahydrofolate pocket.

The protein belongs to the TRAFAC class TrmE-Era-EngA-EngB-Septin-like GTPase superfamily. TrmE GTPase family. In terms of assembly, homodimer. Heterotetramer of two MnmE and two MnmG subunits. K(+) serves as cofactor.

The protein localises to the cytoplasm. Its function is as follows. Exhibits a very high intrinsic GTPase hydrolysis rate. Involved in the addition of a carboxymethylaminomethyl (cmnm) group at the wobble position (U34) of certain tRNAs, forming tRNA-cmnm(5)s(2)U34. This chain is tRNA modification GTPase MnmE, found in Burkholderia thailandensis (strain ATCC 700388 / DSM 13276 / CCUG 48851 / CIP 106301 / E264).